The chain runs to 612 residues: Cyclin-dependent kinase 8 (612 aa).

Positions 23–345 (FENSKEIGRG…CEEAMNDIYF (323 aa)) constitute a Protein kinase domain. ATP-binding positions include 29–37 (IGRGTYGLV) and K57. The active-site Proton acceptor is the D155. Composition is skewed to low complexity over residues 403–455 (QQQM…MGQP), 472–483 (HQMMQQQHQSQH), 543–555 (PQPG…QQRP), 564–573 (QGYMNPQMGM), and 600–612 (NPQQ…QYHR). 2 disordered regions span residues 403 to 483 (QQQM…QSQH) and 543 to 612 (PQPG…QYHR).

This sequence belongs to the protein kinase superfamily. CMGC Ser/Thr protein kinase family. CDC2/CDKX subfamily. As to quaternary structure, component of the Mediator complex. The cofactor is Mg(2+).

It localises to the nucleus. It carries out the reaction L-seryl-[protein] + ATP = O-phospho-L-seryl-[protein] + ADP + H(+). The enzyme catalyses L-threonyl-[protein] + ATP = O-phospho-L-threonyl-[protein] + ADP + H(+). It catalyses the reaction [DNA-directed RNA polymerase] + ATP = phospho-[DNA-directed RNA polymerase] + ADP + H(+). Functionally, component of the Mediator complex, a coactivator involved in regulated gene transcription of nearly all RNA polymerase II-dependent genes. Mediator functions as a bridge to convey information from gene-specific regulatory proteins to the basal RNA polymerase II transcription machinery. Mediator is recruited to promoters by direct interactions with regulatory proteins and serves as a scaffold for the assembly of a functional pre-initiation complex with RNA polymerase II and the general transcription factors. Phosphorylates the CTD (C-terminal domain) of the large subunit of RNA polymerase II (RNAp II), which may inhibit the formation of a transcription initiation complex. This Caenorhabditis briggsae protein is Cyclin-dependent kinase 8 (cdk-8).